Consider the following 379-residue polypeptide: Anhydro-N-acetylmuramic acid kinase (379 aa).

9-16 provides a ligand contact to ATP; it reads GTSADGVD.

It belongs to the anhydro-N-acetylmuramic acid kinase family.

The catalysed reaction is 1,6-anhydro-N-acetyl-beta-muramate + ATP + H2O = N-acetyl-D-muramate 6-phosphate + ADP + H(+). It participates in amino-sugar metabolism; 1,6-anhydro-N-acetylmuramate degradation. It functions in the pathway cell wall biogenesis; peptidoglycan recycling. Its function is as follows. Catalyzes the specific phosphorylation of 1,6-anhydro-N-acetylmuramic acid (anhMurNAc) with the simultaneous cleavage of the 1,6-anhydro ring, generating MurNAc-6-P. Is required for the utilization of anhMurNAc either imported from the medium or derived from its own cell wall murein, and thus plays a role in cell wall recycling. The chain is Anhydro-N-acetylmuramic acid kinase from Synechococcus sp. (strain CC9605).